The sequence spans 160 residues: Transcription antitermination protein NusB (160 aa).

The protein belongs to the NusB family.

Functionally, involved in transcription antitermination. Required for transcription of ribosomal RNA (rRNA) genes. Binds specifically to the boxA antiterminator sequence of the ribosomal RNA (rrn) operons. The polypeptide is Transcription antitermination protein NusB (Sinorhizobium fredii (strain NBRC 101917 / NGR234)).